The following is a 238-amino-acid chain: MNPEQFQTALAEKGIELSDTQLKQFHDYFEMLVEWNEKMNLTAITDEKEVYLKHFYDSISAAFYVDFTKFDTICDVGAGAGFPSLPIKICFPHLEVSIVDSLKKRMTFLDALAEKLGLTDVHFYHDRAETFGQNKAHREKYDLVTARAVARMSVLSELCMPLVKKGGSFLVMKAAQAEQELQTAEKAIKLFGGKVEEHFAFSLPVEESERNIYVITKTKETPNKYPRKPGTPNKLPIE.

Residues Gly-77, Phe-82, Ala-128–Glu-129, and Arg-147 contribute to the S-adenosyl-L-methionine site.

This sequence belongs to the methyltransferase superfamily. RNA methyltransferase RsmG family.

The protein localises to the cytoplasm. Specifically methylates the N7 position of guanine in position 535 of 16S rRNA. The sequence is that of Ribosomal RNA small subunit methyltransferase G from Listeria monocytogenes serotype 4b (strain F2365).